The following is a 3412-amino-acid chain: Genome polyprotein (3412 aa).

The Cytoplasmic segment spans residues Met-1–Glu-104. The interval Pro-38–Leu-72 is hydrophobic; homodimerization of capsid protein C. Positions Ser-102–Gly-121 are cleaved as a propeptide — ER anchor for the capsid protein C, removed in mature form by serine protease NS3. Residues Met-105–Val-125 form a helical membrane-spanning segment. Residues Arg-126–Arg-244 lie on the Extracellular side of the membrane. N-linked (GlcNAc...) asparagine; by host glycans are attached at residues Asn-134 and Asn-150. A helical membrane pass occupies residues Trp-245–Asn-265. Topologically, residues Asn-266 to Arg-270 are cytoplasmic. A helical transmembrane segment spans residues Val-271–Ser-285. The Extracellular segment spans residues Ala-286–Leu-730. Cystine bridges form between Cys-288/Cys-315, Cys-345/Cys-401, Cys-345/Cys-406, Cys-359/Cys-390, Cys-377/Cys-401, Cys-377/Cys-406, Cys-467/Cys-568, and Cys-585/Cys-615. Positions Asp-383–Gly-396 are fusion peptide. The chain crosses the membrane as a helical span at residues Phe-731–Ile-751. The Extracellular segment spans residues Asn-752–Thr-757. The chain crosses the membrane as a helical span at residues Met-758 to Ala-778. The Extracellular segment spans residues Asp-779–Glu-1132. 6 disulfide bridges follow: Cys-782/Cys-793, Cys-833/Cys-921, Cys-957/Cys-1002, Cys-1058/Cys-1107, Cys-1069/Cys-1091, and Cys-1090/Cys-1094. N-linked (GlcNAc...) asparagine; by host glycosylation is found at Asn-908 and Asn-986. The chain crosses the membrane as a helical span at residues Val-1133–Lys-1153. The Cytoplasmic segment spans residues Arg-1154–Ala-1201. The chain crosses the membrane as a helical span at residues Met-1202 to Leu-1222. Over Arg-1223–Pro-1287 the chain is Lumenal. The helical transmembrane segment at Val-1288–Val-1308 threads the bilayer. The Cytoplasmic segment spans residues Leu-1309 to Ser-1355. The helical transmembrane segment at Ile-1356–Phe-1376 threads the bilayer. Residues Gln-1377–Asp-1378 lie on the Lumenal side of the membrane. The chain crosses the membrane as a helical span at residues Met-1379–Ala-1399. At Gly-1400–Leu-1456 the chain is on the cytoplasmic side. Residues Leu-1407–Val-1446 are interacts with and activates NS3 protease. Residues Ala-1457–Leu-1477 constitute an intramembrane region (helical). Topologically, residues His-1478 to Ala-2157 are cytoplasmic. Residues Ser-1485–Leu-1665 form the Peptidase S7 domain. Active-site charge relay system; for serine protease NS3 activity residues include His-1537, Asp-1561, and Ser-1622. The Helicase ATP-binding domain maps to Pro-1669–Gln-1825. The segment at Lys-1673–Met-1676 is important for RNA-binding. ATP is bound at residue Phe-1682–Thr-1689. The DEAH box motif lies at Asp-1773 to His-1776. The Helicase C-terminal domain occupies Glu-1820–Tyr-1997. N6-acetyllysine; by host is present on Lys-1877. The interval Ala-1942–Tyr-1961 is disordered. The helical transmembrane segment at Met-2158 to Phe-2178 threads the bilayer. Over Met-2179–Arg-2186 the chain is Lumenal. Positions Met-2187 to Lys-2207 form an intramembrane region, helical. The Lumenal portion of the chain corresponds to Pro-2208–Thr-2209. A helical transmembrane segment spans residues His-2210–Gly-2230. Over Gln-2231–Ala-2241 the chain is Cytoplasmic. A helical transmembrane segment spans residues Tyr-2242–Leu-2262. Topologically, residues Glu-2263 to Pro-2293 are lumenal. The segment at residues Gly-2294–Trp-2314 is an intramembrane region (helical). Residues Ile-2315–Ser-2360 are Lumenal-facing. Residues Ile-2361 to Ile-2380 form a helical membrane-spanning segment. At Leu-2381–Pro-2421 the chain is on the cytoplasmic side. Residues Ala-2422 to Ala-2442 form a helical membrane-spanning segment. At Met-2443–Arg-2445 the chain is on the lumenal side. A helical membrane pass occupies residues Thr-2446–Glu-2466. The Cytoplasmic portion of the chain corresponds to Gly-2467 to Leu-3411. The mRNA cap 0-1 NS5-type MT domain occupies Gly-2508 to Ser-2772. Residue Ser-2563 participates in S-adenosyl-L-methionine binding. Ser-2563 is modified (phosphoserine). Lys-2568 serves as the catalytic For 2'-O-MTase activity. Gly-2593, Trp-2594, Thr-2611, Leu-2612, Asp-2638, and Ile-2639 together coordinate S-adenosyl-L-methionine. The For 2'-O-MTase activity role is filled by Asp-2653. Ile-2654 contributes to the S-adenosyl-L-methionine binding site. Active-site for 2'-O-MTase activity residues include Lys-2689 and Glu-2725. Tyr-2727 contacts S-adenosyl-L-methionine. The short motif at Arg-2879–Arg-2912 is the Nuclear localization signal element. Residues Glu-2946, His-2950, Cys-2955, and Cys-2958 each contribute to the Zn(2+) site. One can recognise a RdRp catalytic domain in the interval Gly-3036 to Ala-3188. 3 residues coordinate Zn(2+): His-3223, Cys-3239, and Cys-3358.

The protein in the N-terminal section; belongs to the class I-like SAM-binding methyltransferase superfamily. mRNA cap 0-1 NS5-type methyltransferase family. As to quaternary structure, homodimer. Interacts (via N-terminus) with host EXOC1 (via C-terminus); this interaction results in EXOC1 degradation through the proteasome degradation pathway. In terms of assembly, forms heterodimers with envelope protein E in the endoplasmic reticulum and Golgi. Homodimer; in the endoplasmic reticulum and Golgi. Interacts with protein prM. Interacts with non-structural protein 1. As to quaternary structure, homodimer; Homohexamer when secreted. Interacts with envelope protein E. In terms of assembly, interacts (via N-terminus) with serine protease NS3. Forms a heterodimer with serine protease NS3. May form homooligomers. As to quaternary structure, forms a heterodimer with NS2B. Interacts with non-structural protein 2A (via N-terminus). Interacts with NS4B. Interacts with unphosphorylated RNA-directed RNA polymerase NS5; this interaction stimulates RNA-directed RNA polymerase NS5 guanylyltransferase activity. NS3 interacts with host PDCD6IP; this interaction contributes to virion release. In terms of assembly, interacts with serine protease NS3. Homodimer. Interacts with host STAT2; this interaction prevents the establishment of cellular antiviral state. Interacts with serine protease NS3. Interacts with host TRIM23; this interaction leads to NS5 ubiquitination. Specific enzymatic cleavages in vivo yield mature proteins. The nascent capsid protein C contains a C-terminal hydrophobic domain that act as a signal sequence for translocation of prM into the lumen of the ER. Mature capsid protein C is cleaved at a site upstream of this hydrophobic domain by NS3. prM is cleaved in post-Golgi vesicles by a host furin, releasing the mature small envelope protein M, and peptide pr. Non-structural protein 2A-alpha, a C-terminally truncated form of non-structural protein 2A, results from partial cleavage by NS3. Specific enzymatic cleavages in vivo yield mature proteins peptide 2K acts as a signal sequence and is removed from the N-terminus of NS4B by the host signal peptidase in the ER lumen. Signal cleavage at the 2K-4B site requires a prior NS3 protease-mediated cleavage at the 4A-2K site. In terms of processing, cleaved in post-Golgi vesicles by a host furin, releasing the mature small envelope protein M, and peptide pr. This cleavage is incomplete as up to 30% of viral particles still carry uncleaved prM. Post-translationally, N-glycosylated. N-glycosylated. The excreted form is glycosylated and this is required for efficient secretion of the protein from infected cells. In terms of processing, polyubiquitinated; ubiquitination is probably mediated by host TRIM23 and is prerequisite for NS5-STAT2 interaction. NS5 is not ISGylated or sumoylated. Post-translationally, acetylated by host KAT5. Acetylation modulates NS3 RNA-binding and unwinding activities and plays an important positive role for viral replication. Phosphorylated on serines residues. This phosphorylation may trigger NS5 nuclear localization.

It localises to the virion. Its subcellular location is the host nucleus. The protein localises to the host cytoplasm. The protein resides in the host perinuclear region. It is found in the secreted. It localises to the virion membrane. Its subcellular location is the host endoplasmic reticulum membrane. The catalysed reaction is Selective hydrolysis of -Xaa-Xaa-|-Yaa- bonds in which each of the Xaa can be either Arg or Lys and Yaa can be either Ser or Ala.. The enzyme catalyses RNA(n) + a ribonucleoside 5'-triphosphate = RNA(n+1) + diphosphate. It catalyses the reaction a ribonucleoside 5'-triphosphate + H2O = a ribonucleoside 5'-diphosphate + phosphate + H(+). It carries out the reaction ATP + H2O = ADP + phosphate + H(+). The catalysed reaction is a 5'-end (5'-triphosphoguanosine)-ribonucleoside in mRNA + S-adenosyl-L-methionine = a 5'-end (N(7)-methyl 5'-triphosphoguanosine)-ribonucleoside in mRNA + S-adenosyl-L-homocysteine. The enzyme catalyses a 5'-end (N(7)-methyl 5'-triphosphoguanosine)-ribonucleoside in mRNA + S-adenosyl-L-methionine = a 5'-end (N(7)-methyl 5'-triphosphoguanosine)-(2'-O-methyl-ribonucleoside) in mRNA + S-adenosyl-L-homocysteine + H(+). Plays a role in virus budding by binding to the cell membrane and gathering the viral RNA into a nucleocapsid that forms the core of a mature virus particle. During virus entry, may induce genome penetration into the host cytoplasm after hemifusion induced by the surface proteins. Can migrate to the cell nucleus where it modulates host functions. Functionally, inhibits RNA silencing by interfering with host Dicer. In terms of biological role, prevents premature fusion activity of envelope proteins in trans-Golgi by binding to envelope protein E at pH6.0. After virion release in extracellular space, gets dissociated from E dimers. Its function is as follows. Acts as a chaperone for envelope protein E during intracellular virion assembly by masking and inactivating envelope protein E fusion peptide. prM is the only viral peptide matured by host furin in the trans-Golgi network probably to avoid catastrophic activation of the viral fusion activity in acidic Golgi compartment prior to virion release. prM-E cleavage is inefficient, and many virions are only partially matured. These uncleaved prM would play a role in immune evasion. May play a role in virus budding. Exerts cytotoxic effects by activating a mitochondrial apoptotic pathway through M ectodomain. May display a viroporin activity. Functionally, binds to host cell surface receptor and mediates fusion between viral and cellular membranes. Envelope protein is synthesized in the endoplasmic reticulum in the form of heterodimer with protein prM. They play a role in virion budding in the ER, and the newly formed immature particle is covered with 60 spikes composed of heterodimer between precursor prM and envelope protein E. The virion is transported to the Golgi apparatus where the low pH causes dissociation of PrM-E heterodimers and formation of E homodimers. prM-E cleavage is inefficient, and many virions are only partially matured. These uncleaved prM would play a role in immune evasion. In terms of biological role, involved in immune evasion, pathogenesis and viral replication. Once cleaved off the polyprotein, is targeted to three destinations: the viral replication cycle, the plasma membrane and the extracellular compartment. Essential for viral replication. Required for formation of the replication complex and recruitment of other non-structural proteins to the ER-derived membrane structures. Excreted as a hexameric lipoparticle that plays a role against host immune response. Antagonizing the complement function. Binds to the host macrophages and dendritic cells. Inhibits signal transduction originating from Toll-like receptor 3 (TLR3). Its function is as follows. Component of the viral RNA replication complex that functions in virion assembly and antagonizes the host immune response. Required cofactor for the serine protease function of NS3. May have membrane-destabilizing activity and form viroporins. Functionally, displays three enzymatic activities: serine protease, NTPase and RNA helicase. NS3 serine protease, in association with NS2B, performs its autocleavage and cleaves the polyprotein at dibasic sites in the cytoplasm: C-prM, NS2A-NS2B, NS2B-NS3, NS3-NS4A, NS4A-2K and NS4B-NS5. NS3 RNA helicase binds RNA and unwinds dsRNA in the 3' to 5' direction. Also plays a role in virus assembly. In terms of biological role, regulates the ATPase activity of the NS3 helicase activity. NS4A allows NS3 helicase to conserve energy during unwinding. Its function is as follows. Functions as a signal peptide for NS4B and is required for the interferon antagonism activity of the latter. Induces the formation of ER-derived membrane vesicles where the viral replication takes place. Inhibits interferon (IFN)-induced host STAT1 phosphorylation and nuclear translocation, thereby preventing the establishment of cellular antiviral state by blocking the IFN-alpha/beta pathway. Functionally, replicates the viral (+) and (-) RNA genome, and performs the capping of genomes in the cytoplasm. NS5 methylates viral RNA cap at guanine N-7 and ribose 2'-O positions. Besides its role in RNA genome replication, also prevents the establishment of cellular antiviral state by blocking the interferon-alpha/beta (IFN-alpha/beta) signaling pathway. IFN-I induces binding of NS5 to host IFN-activated transcription factor STAT2, preventing its transcriptional activity. Host TRIM23 is the E3 ligase that interacts with and polyubiquitinates NS5 to promote its binding to STAT2 and trigger IFN-I signaling inhibition. The sequence is that of Genome polyprotein from Yellow fever virus (isolate Uganda/A7094A4/1948) (YFV).